Consider the following 277-residue polypeptide: Alpha carbonic anhydrase 3 (277 aa).

The signal sequence occupies residues 1-19 (MKTIILFVTFLALSSSSLA). The 236-residue stretch at 24–259 (TEFHYKPGEI…LNGRLVYLNE (236 aa)) folds into the Alpha-carbonic anhydrase domain. Cys-49 and Cys-209 are oxidised to a cystine. Asn-70 and Asn-107 each carry an N-linked (GlcNAc...) asparagine glycan. Zn(2+)-binding residues include His-117, His-119, and His-136. 205–206 (TT) lines the substrate pocket. Residues 257–277 (LNEQSSPSPTPRLRIPRVGPV) form a disordered region.

Belongs to the alpha-class carbonic anhydrase family. The cofactor is Zn(2+). N-glycosylated. Expressed in flowers and siliques.

Its subcellular location is the plastid. The protein localises to the chloroplast stroma. The enzyme catalyses hydrogencarbonate + H(+) = CO2 + H2O. Its function is as follows. Reversible hydration of carbon dioxide. In Arabidopsis thaliana (Mouse-ear cress), this protein is Alpha carbonic anhydrase 3 (ACA3).